Consider the following 234-residue polypeptide: Leucyl/phenylalanyl-tRNA--protein transferase (234 aa).

It belongs to the L/F-transferase family.

It localises to the cytoplasm. It carries out the reaction N-terminal L-lysyl-[protein] + L-leucyl-tRNA(Leu) = N-terminal L-leucyl-L-lysyl-[protein] + tRNA(Leu) + H(+). The enzyme catalyses N-terminal L-arginyl-[protein] + L-leucyl-tRNA(Leu) = N-terminal L-leucyl-L-arginyl-[protein] + tRNA(Leu) + H(+). It catalyses the reaction L-phenylalanyl-tRNA(Phe) + an N-terminal L-alpha-aminoacyl-[protein] = an N-terminal L-phenylalanyl-L-alpha-aminoacyl-[protein] + tRNA(Phe). In terms of biological role, functions in the N-end rule pathway of protein degradation where it conjugates Leu, Phe and, less efficiently, Met from aminoacyl-tRNAs to the N-termini of proteins containing an N-terminal arginine or lysine. This is Leucyl/phenylalanyl-tRNA--protein transferase from Escherichia coli O81 (strain ED1a).